The following is a 137-amino-acid chain: Nucleoside diphosphate kinase (137 aa).

Residues Lys-9, Phe-58, Arg-86, Thr-92, Arg-103, and Asn-113 each contribute to the ATP site. The active-site Pros-phosphohistidine intermediate is the His-121.

It belongs to the NDK family. In terms of assembly, homotetramer. Mg(2+) is required as a cofactor.

The protein resides in the cytoplasm. The enzyme catalyses a 2'-deoxyribonucleoside 5'-diphosphate + ATP = a 2'-deoxyribonucleoside 5'-triphosphate + ADP. It catalyses the reaction a ribonucleoside 5'-diphosphate + ATP = a ribonucleoside 5'-triphosphate + ADP. Its function is as follows. Major role in the synthesis of nucleoside triphosphates other than ATP. The ATP gamma phosphate is transferred to the NDP beta phosphate via a ping-pong mechanism, using a phosphorylated active-site intermediate. This Streptococcus pneumoniae (strain Hungary19A-6) protein is Nucleoside diphosphate kinase.